The primary structure comprises 133 residues: Brain natriuretic peptide (133 aa).

The signal sequence occupies residues 1 to 22 (MVVSFVSICGLLLIFNLPLSTS). Residues 44 to 53 (SMSEETEEDQ) show a composition bias toward acidic residues. 2 disordered regions span residues 44–76 (SMSE…NRDQ) and 93–112 (TRKN…FGRR). C108 and C124 form a disulfide bridge.

Belongs to the natriuretic peptide family.

It localises to the secreted. In terms of biological role, cardiac hormone which may function as a paracrine antifibrotic factor in the heart. Also plays a key role in cardiovascular homeostasis through natriuresis, diuresis, vasorelaxation, and inhibition of renin and aldosterone secretion. Has a cGMP-stimulating activity. The sequence is that of Brain natriuretic peptide (nppb) from Takifugu rubripes (Japanese pufferfish).